We begin with the raw amino-acid sequence, 395 residues long: Protein BUR2 (395 aa).

Disordered regions lie at residues 1–31 and 372–395; these read MSAT…ASSG and AKQE…KPKI. Ser24 carries the post-translational modification Phosphoserine.

Belongs to the BUR kinase complex composed of SGV1/BUR1 and BUR2. Interacts with SGV1.

The protein localises to the nucleus. In terms of biological role, component of the BUR kinase complex involved in transcription regulation. This complex phosphorylates 'Ser-120' of the UBC2/RAD6 ubiquitin-conjugating enzyme (E2), leading to monoubiquitination of histone H2B, the localization of the PAF1 complex to the chromatin, and the silencing of telomeric-associated genes. Also required for histone H3 'Lys-4' trimethylation. May phosphorylate the 'Ser-5' of the RBP1 carboxy-terminal domain (CTD) repeats. Necessary for the recovery from pheromone-induced growth arrest in the cell cycle G1 phase. Also required for vegetative growth itself. The kinase activity of the complex requires the presence of BUR2. Overexpression of BUR2 interferes with mitotic chromosome segregation. The protein is Protein BUR2 (BUR2) of Saccharomyces cerevisiae (strain ATCC 204508 / S288c) (Baker's yeast).